A 723-amino-acid polypeptide reads, in one-letter code: LIM domain-binding protein 3 (723 aa).

A PDZ domain is found at 1 to 84 (MSYSVTLTGP…NLSLTLQKSK (84 aa)). Residues Ser44, Ser98, and Asp112 each carry the phosphoserine modification. Disordered stretches follow at residues 89–134 (ISTT…GALE) and 164–193 (SPVA…RQYN). Thr119 carries the phosphothreonine modification. Phosphoserine is present on residues Ser121 and Ser123. The residue at position 214 (Ser214) is a Phosphoserine. Position 216 is an omega-N-methylarginine (Arg216). A phosphoserine mark is found at Ser220, Ser251, and Asp288. Disordered stretches follow at residues 280–423 (GTEY…YSPT) and 436–525 (SPAP…PQVT). Residue Ala291 is modified to Omega-N-methylarginine. Residues 309 to 376 (ATSPLLPASA…AAAASPAPSA (68 aa)) are compositionally biased toward low complexity. At Ile327 the chain carries Phosphoserine. At Ser330 the chain carries Omega-N-methylarginine. Pro residues predominate over residues 436-466 (SPAPTYTPSPAPTYSPSPAPAYTPSPAPNYT). A compositionally biased stretch (polar residues) spans 490 to 509 (DSFSQKFAPGKSTTTVSKQT). Arg512 and Arg529 each carry omega-N-methylarginine. LIM zinc-binding domains lie at 545–603 (PLCG…QFFA), 604–663 (PICA…LFST), and 664–723 (KCHG…AINV).

Interacts via its LIM domains with various PKC isoforms. Interacts via its PDZ domain with the ACTN2 C-terminal region. Interacts with MYOZ1, MYOZ2 and MYOZ3. As to expression, expressed primarily in adult heart and skeletal muscle, and detected at lower levels in lung. Isoforms are expressed in a tissue-specific manner. Isoform 1, isoform 3 and isoform 5 are expressed in heart, whereas isoform 2, isoform 4 and isoform 6 are expressed in skeletal muscle.

The protein localises to the cytoplasm. The protein resides in the perinuclear region. It localises to the cell projection. Its subcellular location is the pseudopodium. It is found in the cytoskeleton. The protein localises to the myofibril. The protein resides in the sarcomere. It localises to the z line. Its function is as follows. May function as an adapter in striated muscle to couple protein kinase C-mediated signaling via its LIM domains to the cytoskeleton. The chain is LIM domain-binding protein 3 from Mus musculus (Mouse).